Reading from the N-terminus, the 381-residue chain is N-acetyl-alpha-D-glucosaminyl L-malate synthase (381 aa).

(S)-malate is bound by residues Ser16, Tyr94, and Thr122. Residues Asn206, Gln262, and Glu290 each coordinate UDP.

It belongs to the glycosyltransferase group 1 family. Glycosyltransferase 4 subfamily. As to quaternary structure, dimer of tetramers.

The catalysed reaction is (S)-malate + UDP-N-acetyl-alpha-D-glucosamine = (S)-malyl N-acetyl-alpha-D-glucosaminide + UDP + H(+). In terms of biological role, involved in bacillithiol (BSH) biosynthesis. Catalyzes the first step of the pathway, the formation of N-acetylglucosaminylmalate (GlcNAc-Mal) from UDP-N-acetylglucosamine (UDP-GlcNAc) and L-malate. The polypeptide is N-acetyl-alpha-D-glucosaminyl L-malate synthase (Bacillus anthracis).